The following is a 189-amino-acid chain: Interferon alpha-1/13 (189 aa).

A signal peptide spans 1–23 (MASPFALLMVLVVLSCKSSCSLG). 2 disulfides stabilise this stretch: C24-C122 and C52-C162.

The protein belongs to the alpha/beta interferon family. In terms of assembly, interacts with CR2.

It is found in the secreted. Functionally, produced by macrophages, IFN-alpha have antiviral activities. Interferon stimulates the production of two enzymes: a protein kinase and an oligoadenylate synthetase. The protein is Interferon alpha-1/13 (IFNA1) of Homo sapiens (Human).